Reading from the N-terminus, the 262-residue chain is MEGFSLRINQFLAHYTKHSRREAEKLVLEGRVKINHEHAKLASVVKENDKVFLDKRLIKPLKNKKFSVLVYHKPKGELVSKADPLKRHVIYESLEKKYAHFAPVGRLDFASEGVLLLSDSKAVVSALMHANLEKEYLVKIQGFVTREMENAMQEGLKLENATKGAHQKTPIKSMEFAPFIGYEIIKNHAKYSKLRVIINEGKNRELRRFFAFFNAGVLDLRRVRYGFVNLNALPVGKARFLNRQEYNELHAFMANRANVKGD.

Positions 6-70 constitute an S4 RNA-binding domain; it reads LRINQFLAHY…LKNKKFSVLV (65 aa). Asp108 acts as the Nucleophile in catalysis.

The protein belongs to the pseudouridine synthase RsuA family.

It carries out the reaction a uridine in RNA = a pseudouridine in RNA. This is an uncharacterized protein from Helicobacter pylori (strain J99 / ATCC 700824) (Campylobacter pylori J99).